Here is a 291-residue protein sequence, read N- to C-terminus: Ribosomal RNA small subunit methyltransferase A (291 aa).

S-adenosyl-L-methionine is bound by residues N28, L30, G55, E77, D103, and N123.

It belongs to the class I-like SAM-binding methyltransferase superfamily. rRNA adenine N(6)-methyltransferase family. RsmA subfamily.

It is found in the cytoplasm. It catalyses the reaction adenosine(1518)/adenosine(1519) in 16S rRNA + 4 S-adenosyl-L-methionine = N(6)-dimethyladenosine(1518)/N(6)-dimethyladenosine(1519) in 16S rRNA + 4 S-adenosyl-L-homocysteine + 4 H(+). In terms of biological role, specifically dimethylates two adjacent adenosines (A1518 and A1519) in the loop of a conserved hairpin near the 3'-end of 16S rRNA in the 30S particle. May play a critical role in biogenesis of 30S subunits. The polypeptide is Ribosomal RNA small subunit methyltransferase A (Azorhizobium caulinodans (strain ATCC 43989 / DSM 5975 / JCM 20966 / LMG 6465 / NBRC 14845 / NCIMB 13405 / ORS 571)).